Reading from the N-terminus, the 200-residue chain is NADH-quinone oxidoreductase subunit C (200 aa).

The protein belongs to the complex I 30 kDa subunit family. In terms of assembly, NDH-1 is composed of 14 different subunits. Subunits NuoB, C, D, E, F, and G constitute the peripheral sector of the complex.

The protein localises to the cell inner membrane. It catalyses the reaction a quinone + NADH + 5 H(+)(in) = a quinol + NAD(+) + 4 H(+)(out). NDH-1 shuttles electrons from NADH, via FMN and iron-sulfur (Fe-S) centers, to quinones in the respiratory chain. The immediate electron acceptor for the enzyme in this species is believed to be ubiquinone. Couples the redox reaction to proton translocation (for every two electrons transferred, four hydrogen ions are translocated across the cytoplasmic membrane), and thus conserves the redox energy in a proton gradient. This Paraburkholderia phytofirmans (strain DSM 17436 / LMG 22146 / PsJN) (Burkholderia phytofirmans) protein is NADH-quinone oxidoreductase subunit C.